A 456-amino-acid chain; its full sequence is Riboflavin transporter RibZ (456 aa).

Helical transmembrane passes span W5–L25, W45–G65, F78–I98, A105–A125, I134–L154, G158–I178, S192–M212, L220–F240, I260–L280, M289–A309, I321–A341, S343–S363, F385–F405, and Q428–M448.

Belongs to the major facilitator superfamily.

It localises to the cell membrane. Functionally, transports riboflavin into the cell. This chain is Riboflavin transporter RibZ, found in Clostridioides difficile (strain 630) (Peptoclostridium difficile).